The primary structure comprises 157 residues: MATTIDARALAAPLVEALLTTAAEQIRAAAPRIAGLSASEAAAVLPADLLPQVRNFLLTMAKEGLTGELNAVAAALPGYLETGSRAVDASVTSAIELSAEQKERITRELQQRYGDVHVTYHVDPTLIGGLIIRVGDQVLDNSLRARLSAIQRVLQAS.

Belongs to the ATPase delta chain family. In terms of assembly, F-type ATPases have 2 components, F(1) - the catalytic core - and F(0) - the membrane proton channel. F(1) has five subunits: alpha(3), beta(3), gamma(1), delta(1), epsilon(1). F(0) has three main subunits: a(1), b(2) and c(10-14). The alpha and beta chains form an alternating ring which encloses part of the gamma chain. F(1) is attached to F(0) by a central stalk formed by the gamma and epsilon chains, while a peripheral stalk is formed by the delta and b chains.

Its subcellular location is the cell membrane. Its function is as follows. F(1)F(0) ATP synthase produces ATP from ADP in the presence of a proton or sodium gradient. F-type ATPases consist of two structural domains, F(1) containing the extramembraneous catalytic core and F(0) containing the membrane proton channel, linked together by a central stalk and a peripheral stalk. During catalysis, ATP synthesis in the catalytic domain of F(1) is coupled via a rotary mechanism of the central stalk subunits to proton translocation. In terms of biological role, this protein is part of the stalk that links CF(0) to CF(1). It either transmits conformational changes from CF(0) to CF(1) or is implicated in proton conduction. The sequence is that of ATP synthase subunit delta from Chloroflexus aurantiacus (strain ATCC 29364 / DSM 637 / Y-400-fl).